The chain runs to 357 residues: MAEQWGKQVFAARRQNEDTTRGSAFTYTNSNHTRDPFEGPNYHIAPRWVYNLATLWMFFVVVLSVFTNGLVLVATAKFKKLRHPLNWILSNLAIADLGETVFASTISVCNQFFGYFILGHPMCVFEGYVVSTCGIAALWSLTIISWERWVVVCKPFGNVKFDAKWAIGGIVFSWVWSAVWCAPPVFGWSRYWPHGLKTSCGPDVFSGSDDPGVQSYMIVLMITCCIIPLAIIILCYLAVWLAIRAVAMQQKESESTQKAEREVSRMVVVMIVAYCVCWGPYTFFACFAAANPGYAFHPLAAAMPAYFAKSATIYNPVIYVFMNRQFRTCIMQLFGKQVDDGSEVSTSKTEVSSVAPA.

Topologically, residues 1-49 are extracellular; the sequence is MAEQWGKQVFAARRQNEDTTRGSAFTYTNSNHTRDPFEGPNYHIAPRWV. N31 carries an N-linked (GlcNAc...) asparagine glycan. A helical transmembrane segment spans residues 50–74; it reads YNLATLWMFFVVVLSVFTNGLVLVA. Over 75–86 the chain is Cytoplasmic; it reads TAKFKKLRHPLN. Residues 87-112 form a helical membrane-spanning segment; sequence WILSNLAIADLGETVFASTISVCNQF. Over 113 to 126 the chain is Extracellular; it reads FGYFILGHPMCVFE. A disulfide bridge links C123 with C200. Residues 127–146 form a helical membrane-spanning segment; that stretch reads GYVVSTCGIAALWSLTIISW. Residues 147–165 lie on the Cytoplasmic side of the membrane; it reads ERWVVVCKPFGNVKFDAKW. The helical transmembrane segment at 166 to 189 threads the bilayer; the sequence is AIGGIVFSWVWSAVWCAPPVFGWS. At 190-215 the chain is on the extracellular side; it reads RYWPHGLKTSCGPDVFSGSDDPGVQS. Residues 216 to 243 form a helical membrane-spanning segment; the sequence is YMIVLMITCCIIPLAIIILCYLAVWLAI. Over 244-265 the chain is Cytoplasmic; the sequence is RAVAMQQKESESTQKAEREVSR. Residues 266–289 traverse the membrane as a helical segment; it reads MVVVMIVAYCVCWGPYTFFACFAA. The Extracellular portion of the chain corresponds to 290 to 297; sequence ANPGYAFH. A helical membrane pass occupies residues 298-322; the sequence is PLAAAMPAYFAKSATIYNPVIYVFM. K309 bears the N6-(retinylidene)lysine mark. At 323–357 the chain is on the cytoplasmic side; it reads NRQFRTCIMQLFGKQVDDGSEVSTSKTEVSSVAPA.

It belongs to the G-protein coupled receptor 1 family. Opsin subfamily. Phosphorylated on some or all of the serine and threonine residues present in the C-terminal region. In terms of tissue distribution, the color pigments are found in the cone photoreceptor cells.

The protein resides in the membrane. Visual pigments are the light-absorbing molecules that mediate vision. They consist of an apoprotein, opsin, covalently linked to cis-retinal. The protein is Red-sensitive opsin of Oryzias latipes (Japanese rice fish).